We begin with the raw amino-acid sequence, 374 residues long: O-methyltransferase acrG (374 aa).

5 residues coordinate S-adenosyl-L-homocysteine: Tyr-19, Asn-70, Asp-96, Ser-128, and Phe-129. Phe-245 is a Mg(2+) binding site.

This sequence belongs to the methyltransferase superfamily. Type-7 methyltransferase family.

Its pathway is secondary metabolite biosynthesis. In terms of biological role, O-methyltransferase; part of the cluster that mediates the biosynthesis of acurin A, a highly reduced polyketide coupled to a serine via a peptide bond. The activities of the highly reducing polyketide synthase acrA and the nonribosomal peptide synthetase acrB are collectively responsible for the synthesis of the acurin A core structure with a heptaketide backbone produced by acrA covalently fused to a L-serine by acrB. After the formation of the PK-NRP hybrid product, it is detached from acrB by reductive release to set up the formation of the lactam ring by aldol condensation. The hydrolyase acrC then catalyzes water loss to generate a double bond in the ring. This double bond is probably reduced, which is followed by three oxidations at C-22 to generate the carboxylic acid moiety, involving probably the FAD-binding monooxygenase acrE and the cytochrome P450 monooxygenases acrD and acrF. Finally, a last methylation step performed by the O-methyltransferase acrG leads to the production of acurin A. In Aspergillus aculeatus (strain ATCC 16872 / CBS 172.66 / WB 5094), this protein is O-methyltransferase acrG.